A 280-amino-acid polypeptide reads, in one-letter code: 3-methyl-2-oxobutanoate hydroxymethyltransferase (280 aa).

Mg(2+) is bound by residues D49 and D88. Residues 49–50, D88, and K118 each bind 3-methyl-2-oxobutanoate; that span reads DS. E120 provides a ligand contact to Mg(2+). Catalysis depends on E187, which acts as the Proton acceptor.

The protein belongs to the PanB family. Homodecamer; pentamer of dimers. The cofactor is Mg(2+).

It is found in the cytoplasm. The catalysed reaction is 3-methyl-2-oxobutanoate + (6R)-5,10-methylene-5,6,7,8-tetrahydrofolate + H2O = 2-dehydropantoate + (6S)-5,6,7,8-tetrahydrofolate. It functions in the pathway cofactor biosynthesis; (R)-pantothenate biosynthesis; (R)-pantoate from 3-methyl-2-oxobutanoate: step 1/2. Catalyzes the reversible reaction in which hydroxymethyl group from 5,10-methylenetetrahydrofolate is transferred onto alpha-ketoisovalerate to form ketopantoate. The protein is 3-methyl-2-oxobutanoate hydroxymethyltransferase of Xanthobacter autotrophicus (strain ATCC BAA-1158 / Py2).